We begin with the raw amino-acid sequence, 348 residues long: tRNA pseudouridine synthase D (348 aa).

Phe26 is a substrate binding site. Asp79 (nucleophile) is an active-site residue. Asn128 contacts substrate. A TRUD domain is found at 154–302 (GVPNYFGSQR…VDPARRALLL (149 aa)). Phe328 serves as a coordination point for substrate.

This sequence belongs to the pseudouridine synthase TruD family.

It carries out the reaction uridine(13) in tRNA = pseudouridine(13) in tRNA. In terms of biological role, responsible for synthesis of pseudouridine from uracil-13 in transfer RNAs. The sequence is that of tRNA pseudouridine synthase D from Serratia proteamaculans (strain 568).